Reading from the N-terminus, the 71-residue chain is Large ribosomal subunit protein bL31 (71 aa).

C16, C18, C36, and C39 together coordinate Zn(2+).

This sequence belongs to the bacterial ribosomal protein bL31 family. Type A subfamily. In terms of assembly, part of the 50S ribosomal subunit. Requires Zn(2+) as cofactor.

Its function is as follows. Binds the 23S rRNA. The chain is Large ribosomal subunit protein bL31 from Syntrophus aciditrophicus (strain SB).